The following is a 583-amino-acid chain: Putative ABC transporter ATP-binding protein exp8 (583 aa).

One can recognise an ABC transmembrane type-1 domain in the interval threonine 25–threonine 308. 5 consecutive transmembrane segments (helical) span residues phenylalanine 26–alanine 46, alanine 61–valine 81, methionine 135–tyrosine 155, valine 159–valine 179, and leucine 259–valine 279. One can recognise an ABC transporter domain in the interval isoleucine 341–leucine 574. Glycine 374 to serine 381 lines the ATP pocket.

The protein belongs to the ABC transporter superfamily.

It is found in the cell membrane. The chain is Putative ABC transporter ATP-binding protein exp8 (exp8) from Streptococcus pneumoniae serotype 4 (strain ATCC BAA-334 / TIGR4).